Consider the following 362-residue polypeptide: Chorismate synthase (362 aa).

Arginine 47 is an NADP(+) binding site. Residues 124–126 (RSS), glycine 286, 301–305 (KPTAT), and arginine 327 contribute to the FMN site.

This sequence belongs to the chorismate synthase family. In terms of assembly, homotetramer. It depends on FMNH2 as a cofactor.

It carries out the reaction 5-O-(1-carboxyvinyl)-3-phosphoshikimate = chorismate + phosphate. It functions in the pathway metabolic intermediate biosynthesis; chorismate biosynthesis; chorismate from D-erythrose 4-phosphate and phosphoenolpyruvate: step 7/7. In terms of biological role, catalyzes the anti-1,4-elimination of the C-3 phosphate and the C-6 proR hydrogen from 5-enolpyruvylshikimate-3-phosphate (EPSP) to yield chorismate, which is the branch point compound that serves as the starting substrate for the three terminal pathways of aromatic amino acid biosynthesis. This reaction introduces a second double bond into the aromatic ring system. The chain is Chorismate synthase from Synechocystis sp. (strain ATCC 27184 / PCC 6803 / Kazusa).